The chain runs to 109 residues: Ribonuclease P protein component 4 (109 aa).

Zn(2+) contacts are provided by Cys-65, Cys-68, Cys-94, and Cys-97.

This sequence belongs to the eukaryotic/archaeal RNase P protein component 4 family. Consists of a catalytic RNA component and at least 4-5 protein subunits. It depends on Zn(2+) as a cofactor.

It is found in the cytoplasm. It carries out the reaction Endonucleolytic cleavage of RNA, removing 5'-extranucleotides from tRNA precursor.. Its function is as follows. Part of ribonuclease P, a protein complex that generates mature tRNA molecules by cleaving their 5'-ends. The protein is Ribonuclease P protein component 4 of Methanococcus vannielii (strain ATCC 35089 / DSM 1224 / JCM 13029 / OCM 148 / SB).